The following is a 58-amino-acid chain: Alpha-conotoxin-like Pu1.6 (58 aa).

The signal sequence occupies residues 1–17 (MFTVFLLVVLVTTVVFS). The propeptide occupies 18 to 35 (TSDHRPASNHENRRASKR). 2 disulfides stabilise this stretch: Cys-44–Cys-50 and Cys-45–Cys-58. Residues 46 to 48 (TNP) are lacks the Ser-Xaa-Pro motif that is crucial for potent interaction with nAChR.

The protein belongs to the conotoxin A superfamily. Expressed by the venom duct.

It localises to the secreted. Functionally, alpha-conotoxins act on postsynaptic membranes, they bind to the nicotinic acetylcholine receptors (nAChR) and thus inhibit them. Has possibly a distinct nAChR binding mode from other alpha-conotoxins, due to a different three residue motif (lacks the Ser-Xaa-Pro motif). This Conus pulicarius (Flea-bitten cone) protein is Alpha-conotoxin-like Pu1.6.